Here is a 105-residue protein sequence, read N- to C-terminus: Ferredoxin (105 aa).

2 residues coordinate [3Fe-4S] cluster: Cys-8 and Cys-16. [4Fe-4S] cluster-binding residues include Cys-20, Cys-39, Cys-42, and Cys-45. The 4Fe-4S ferredoxin-type domain occupies 30-59 (RSLYIHPDECVDCGACEPVCPVEAIFYEDD). Residue Cys-49 participates in [3Fe-4S] cluster binding.

It depends on [4Fe-4S] cluster as a cofactor. Requires [3Fe-4S] cluster as cofactor.

Ferredoxins are iron-sulfur proteins that transfer electrons in a wide variety of metabolic reactions. Functionally, putative electron transport protein for the cytochrome P-450SOY system from the same organism. The chain is Ferredoxin from Streptomyces griseus.